Here is a 243-residue protein sequence, read N- to C-terminus: Ribosomal RNA small subunit methyltransferase J (243 aa).

S-adenosyl-L-methionine is bound by residues Glu-112–Arg-113 and Asp-164.

It belongs to the methyltransferase superfamily. RsmJ family.

Its subcellular location is the cytoplasm. It carries out the reaction guanosine(1516) in 16S rRNA + S-adenosyl-L-methionine = N(2)-methylguanosine(1516) in 16S rRNA + S-adenosyl-L-homocysteine + H(+). Specifically methylates the guanosine in position 1516 of 16S rRNA. The polypeptide is Ribosomal RNA small subunit methyltransferase J (Legionella pneumophila subsp. pneumophila (strain Philadelphia 1 / ATCC 33152 / DSM 7513)).